The primary structure comprises 108 residues: Probable 4-amino-4-deoxy-L-arabinose-phosphoundecaprenol flippase subunit ArnE (108 aa).

The next 3 membrane-spanning stretches (helical) occupy residues 36–56 (SLWLALACLGSGLLIWLLVLQ), 58–78 (LDVGIAYPMLGVNFVLITLAG), and 85–105 (PVDVRHWLGIALILVGVFQLG).

It belongs to the ArnE family. As to quaternary structure, heterodimer of ArnE and ArnF.

It localises to the cell inner membrane. Its pathway is bacterial outer membrane biogenesis; lipopolysaccharide biosynthesis. In terms of biological role, translocates 4-amino-4-deoxy-L-arabinose-phosphoundecaprenol (alpha-L-Ara4N-phosphoundecaprenol) from the cytoplasmic to the periplasmic side of the inner membrane. The sequence is that of Probable 4-amino-4-deoxy-L-arabinose-phosphoundecaprenol flippase subunit ArnE from Pseudomonas syringae pv. syringae (strain B728a).